Here is a 116-residue protein sequence, read N- to C-terminus: Large ribosomal subunit protein bL20c (116 aa).

It belongs to the bacterial ribosomal protein bL20 family.

Its subcellular location is the plastid. It is found in the chloroplast. In terms of biological role, binds directly to 23S ribosomal RNA and is necessary for the in vitro assembly process of the 50S ribosomal subunit. It is not involved in the protein synthesizing functions of that subunit. The protein is Large ribosomal subunit protein bL20c of Ipomoea purpurea (Common morning glory).